The primary structure comprises 151 residues: Neuroglobin (151 aa).

Positions 1–149 constitute a Globin domain; the sequence is MERPEPELIR…VVQAMSRGWD (149 aa). Cys46 and Cys55 form a disulfide bridge. Residues His64 and His96 each coordinate heme b.

This sequence belongs to the globin family. Monomer. Homodimer and homotetramer; disulfide-linked. Mainly monomeric but also detected as part of homodimers and homotetramers. Interacts with 14-3-3 proteins; regulates the phosphorylation of NGB. Could interact (ferrous form) with G-alpha(i) proteins (GTP-bound form). Phosphorylated during hypoxia by ERK1/ERK2. Phosphorylation regulates the heme pocket hexacoordination preventing the association of His-64 with the heme metal center. Thereby, promotes the access of dioxygen and nitrite to the heme and stimulates the nitrite reductase activity. Phosphorylation during hypoxia is stabilized by 14-3-3 proteins. In terms of processing, an intramolecular Cys-46/Cys-55 disulfide bond, not necessarily present in orthologs, regulates the heme pocket hexacoordination preventing the association of His-64 with the heme metal center. Thereby, promotes the access of dioxygen and nitrite to the heme and stimulates the nitrite reductase activity. Predominantly expressed in brain, the strongest expression is seen in the frontal lobe, the subthalamic nucleus and the thalamus.

Its subcellular location is the cytoplasm. It is found in the cytosol. The protein resides in the mitochondrion matrix. The enzyme catalyses Fe(III)-heme b-[protein] + nitric oxide + H2O = Fe(II)-heme b-[protein] + nitrite + 2 H(+). Its function is as follows. Monomeric globin with a bis-histidyl six-coordinate heme-iron atom through which it can bind dioxygen, carbon monoxide and nitric oxide. Could help transport oxygen and increase its availability to the metabolically active neuronal tissues, though its low quantity in tissues as well as its high affinity for dioxygen, which may limit its oxygen-releasing ability, argue against it. The ferrous/deoxygenated form exhibits a nitrite reductase activity and it could produce nitric oxide which in turn inhibits cellular respiration in response to hypoxia. In its ferrous/deoxygenated state, it may also exhibit GDI (Guanine nucleotide Dissociation Inhibitor) activity toward heterotrimeric G-alpha proteins, thereby regulating signal transduction to facilitate neuroprotective responses in the wake of hypoxia and associated oxidative stress. In Homo sapiens (Human), this protein is Neuroglobin.